A 260-amino-acid polypeptide reads, in one-letter code: Thymidylate synthase (260 aa).

It participates in pyrimidine metabolism; dTTP biosynthesis. In terms of biological role, is able to catalyze the biosynthesis of dTMP using dUMP, tetrahydrofolate and formaldehyde in vitro, i.e. a reaction equivalent to that catalyzed by bacterial thymidylate synthases (EC 2.1.1.45). However, M.jannaschii like most methanogenic Archaea lacks folates, thus the physiological cosubstrate is unknown but is likely one of the non-methylated methanopterin biosynthetic intermediates. This Methanocaldococcus jannaschii (strain ATCC 43067 / DSM 2661 / JAL-1 / JCM 10045 / NBRC 100440) (Methanococcus jannaschii) protein is Thymidylate synthase.